Here is a 418-residue protein sequence, read N- to C-terminus: rRNA methyltransferase 3, mitochondrial (418 aa).

A mitochondrion-targeting transit peptide spans 1 to 40 (MAAPAKGMWCSLGSLLRVVQTRDLNARRWVRALRRSPVRV). A disordered region spans residues 41 to 90 (LSPSGQVEERKRAPDQQPRKAVPKASSQGQRQKQPLETSPSQTPHTWEEA). Over residues 47-58 (VEERKRAPDQQP) the composition is skewed to basic and acidic residues. Over residues 65-85 (ASSQGQRQKQPLETSPSQTPH) the composition is skewed to polar residues. Positions 354, 378, and 387 each coordinate S-adenosyl-L-methionine.

It belongs to the class IV-like SAM-binding methyltransferase superfamily. RNA methyltransferase TrmH family.

The protein localises to the mitochondrion. It catalyses the reaction guanosine(1370) in 16S rRNA + S-adenosyl-L-methionine = 2'-O-methylguanosine(1370) in 16S rRNA + S-adenosyl-L-homocysteine + H(+). In terms of biological role, S-adenosyl-L-methionine-dependent 2'-O-ribose methyltransferase that catalyzes the formation of 2'-O-methylguanosine at position 1370 (Gm1370) in the 16S mitochondrial large subunit ribosomal RNA (mtLSU rRNA), a conserved modification in the peptidyl transferase domain of the mtLSU rRNA. Also required for formation of 2'-O-methyluridine at position 1369 (Um1369) mediated by MRM2. The polypeptide is rRNA methyltransferase 3, mitochondrial (Mus musculus (Mouse)).